A 1057-amino-acid chain; its full sequence is Structural maintenance of chromosomes protein 6B (1057 aa).

The 1026-residue stretch at 22–1047 (ILRIKVENFM…ISMVKSHERI (1026 aa)) folds into the Zinc-hook domain. 49 to 56 (GQNGSGKS) contacts ATP. A coiled-coil region spans residues 135–448 (KVSNKRDELR…NDLKKHQTNK (314 aa)). The flexible hinge stretch occupies residues 449–632 (VTAFGGDRVI…PPLSRRPSRL (184 aa)). Residues 633–904 (CASFDDQIKD…QDHREKLMAC (272 aa)) are a coiled coil. Over residues 818 to 828 (KNKRKESDQKA) the composition is skewed to basic and acidic residues. The interval 818 to 845 (KNKRKESDQKASEICPESEIESLGPWDG) is disordered.

Belongs to the SMC family. SMC6 subfamily. As to quaternary structure, forms a heterodimer with SMC5. The SMC5-SMC6 complex is composed of the SMC5 and SMC6 heterodimer attached via their hinge domain and from the non-SMC subunit NSE4A or NSE4B. In terms of tissue distribution, expressed in seedlings, rosette leaves and floral buds.

The protein localises to the nucleus. The protein resides in the chromosome. Functionally, core component of the SMC5-SMC6 complex that promotes sister chromatid alignment after DNA damage and facilitates double-stranded DNA breaks (DSBs) repair via homologous recombination between sister chromatids. In Arabidopsis thaliana (Mouse-ear cress), this protein is Structural maintenance of chromosomes protein 6B (SMC6B).